We begin with the raw amino-acid sequence, 504 residues long: Pre-mRNA-processing factor 19 (504 aa).

Residue Ser-2 is modified to N-acetylserine. The U-box domain occupies 2–73; sequence SLICSISNEV…KPPSATSIPA (72 aa). Positions 68 to 223 are may mediate interaction with PSMC5; it reads ATSIPAILKA…VGLHSASIPG (156 aa). N6-acetyllysine occurs at positions 122, 179, 244, and 261. Residues 219–259 form a WD 1 repeat; it reads ASIPGILALDLCPSDTNKILTGGADKNVVVFDKSTEQILAT. WD repeat units lie at residues 262-301, 304-345, 348-387, 390-429, 433-472, and 473-503; these read GHTK…CVQV, AHES…TKVT, TSGC…NVAN, GHSG…NFKT, DNNF…LHFT, and EHSG…KFYS.

It belongs to the WD repeat PRP19 family. As to quaternary structure, homotetramer. Component of activated, catalytic and post-catalytic spliceosomes. Component of the Prp19 complex/PRP19C/Nineteen complex/NTC and related complexes described as PRP19-CDC5L splicing complex and PSO4 complex. A homotetramer of PRPF19, CDC5L, PLRG1 and BCAS2 constitute the core of those complexes. The interaction with CDC5L, PLRG1 and BCAS2 is direct within this core complex. At least three less stably associated proteins CTNNBL1, CWC15 and HSPA8 are found in the Prp19 complex. The Prp19 complex associates with the spliceosome during its assembly and remodeling recruiting additional proteins. Component of the XAB2 complex, a multimeric protein complex composed of XAB2, PRPF19, AQR, ZNF830, ISY1, and PPIE. Interacts with CWC22 and EIF4A3 in an RNA-independent manner. Interacts with RPA1 and RPA2; the PRP19-CDC5L complex is recruited to the sites of DNA repair where it interacts with the replication protein A complex (RPA). Interacts with SETMAR; required for SETMAR recruitment to site of DNA damage. Interacts with U2AF2; the interaction is direct and recruits the Prp19 complex to RNA polymerase II C-terminal domain (CTD) and the pre-mRNA. Interacts with PRPF3. Interacts with APEX1, DNTT and PSMB4. Interacts with KNSTRN. Interacts with PSMC5. Isoform 2 (via N-terminus) interacts with PPIA. Isoform 2 does not interact with CDC5L. Interacts with KHDC4. Interacts with USB1. Interacts with DDX41. In terms of tissue distribution, expressed in white and brown adipose tissues, brain and to a lower extent in liver, kidney, muscle, lung and spleen (at protein level).

The protein localises to the nucleus. The protein resides in the nucleoplasm. Its subcellular location is the cytoplasm. It localises to the cytoskeleton. It is found in the spindle. The protein localises to the lipid droplet. It catalyses the reaction S-ubiquitinyl-[E2 ubiquitin-conjugating enzyme]-L-cysteine + [acceptor protein]-L-lysine = [E2 ubiquitin-conjugating enzyme]-L-cysteine + N(6)-ubiquitinyl-[acceptor protein]-L-lysine.. The protein operates within protein modification; protein ubiquitination. Its function is as follows. Ubiquitin-protein ligase which is a core component of several complexes mainly involved in pre-mRNA splicing and DNA repair. Required for pre-mRNA splicing as component of the spliceosome. Core component of the PRP19C/Prp19 complex/NTC/Nineteen complex which is part of the spliceosome and participates in its assembly, its remodeling and is required for its activity. During assembly of the spliceosome, mediates 'Lys-63'-linked polyubiquitination of the U4 spliceosomal protein PRPF3. Ubiquitination of PRPF3 allows its recognition by the U5 component PRPF8 and stabilizes the U4/U5/U6 tri-snRNP spliceosomal complex. Recruited to RNA polymerase II C-terminal domain (CTD) and the pre-mRNA, it may also couple the transcriptional and spliceosomal machineries. The XAB2 complex, which contains PRPF19, is also involved in pre-mRNA splicing, transcription and transcription-coupled repair. Beside its role in pre-mRNA splicing PRPF19, as part of the PRP19-CDC5L complex, plays a role in the DNA damage response/DDR. It is recruited to the sites of DNA damage by the RPA complex where PRPF19 directly ubiquitinates RPA1 and RPA2. 'Lys-63'-linked polyubiquitination of the RPA complex allows the recruitment of the ATR-ATRIP complex and the activation of ATR, a master regulator of the DNA damage response. May also play a role in DNA double-strand break (DSB) repair by recruiting the repair factor SETMAR to altered DNA. As part of the PSO4 complex may also be involved in the DNA interstrand cross-links/ICLs repair process. In addition, may also mediate 'Lys-48'-linked polyubiquitination of substrates and play a role in proteasomal degradation. May play a role in the biogenesis of lipid droplets. May play a role in neural differentiation possibly through its function as part of the spliceosome. In terms of biological role, forced expression leads to suppression of neuronal differentiation, and on the contrary to stimulation of astroglial cell differentiation in retinoic acid-primed P19 cells. The sequence is that of Pre-mRNA-processing factor 19 from Mus musculus (Mouse).